Consider the following 205-residue polypeptide: Proteasome subunit beta type-3 (205 aa).

It belongs to the peptidase T1B family. As to quaternary structure, the 26S proteasome consists of a 20S proteasome core and two 19S regulatory subunits. The 20S proteasome core is composed of 28 subunits that are arranged in four stacked rings, resulting in a barrel-shaped structure. The two end rings are each formed by seven alpha subunits, and the two central rings are each formed by seven beta subunits. The catalytic chamber with the active sites is on the inside of the barrel.

It is found in the cytoplasm. Its subcellular location is the nucleus. Non-catalytic component of the proteasome, a multicatalytic proteinase complex which is characterized by its ability to cleave peptides with Arg, Phe, Tyr, Leu, and Glu adjacent to the leaving group at neutral or slightly basic pH. The proteasome has an ATP-dependent proteolytic activity. This chain is Proteasome subunit beta type-3 (PSB3), found in Trypanosoma brucei brucei.